A 598-amino-acid chain; its full sequence is MKHIRNFCIIAHIDHGKSTLADRLIQSCGGVTQREFHDQMLDSMDIERERGITIKSNTVTLNYTAKDGEAYQLNLIDTPGHVDFSHEVRRSLMACEGALMVVDASQGVEAQTVANLYLALEYDLELLPVINKIDLPAADVDRVRGEIDEDLGLDPFVAIPVSAKTGQGIEDVLEGIVKNLPAPKGDPKAPLKALVFDAFFDKYRGVILQCRVMEGTLKPKDEIHFMHADRDFTVDELGYNQFKLVPKKELTAGEVGYIVAGVKTVQDIEIGDTITLANRPADEPIPGYQPARQVVFSSVYPMSTDEYQDLTKALEKLSINDAALTFEKDSSAALGFGYRCGFLGLLHLDVVQERLQREFDIGLVISAPSVQYKIKLKDGTTQDVDNPTYWPDPSTIDSVSEPYIKAQILIPEEYVGPVMELCREHRSESQTMNYLSAGRLEVTSEMPLGEVLFDFYGKLKMITRGYGSFDYVPIEYRKTDIVKVDILVNKEPVDALAYLVHRDKSRARAMHYCEQLAEAIPRHQFKIPIQGAIGGTVIARTTIAPYRKDVTAKLYGGDVSRKKKLLEKQKKGKAKMKQFGSVNIPQKAFISVLRTDKD.

In terms of domain architecture, tr-type G spans 2 to 184 (KHIRNFCIIA…GIVKNLPAPK (183 aa)). GTP-binding positions include 14–19 (DHGKST) and 131–134 (NKID).

The protein belongs to the TRAFAC class translation factor GTPase superfamily. Classic translation factor GTPase family. LepA subfamily.

The protein resides in the cell inner membrane. The enzyme catalyses GTP + H2O = GDP + phosphate + H(+). In terms of biological role, required for accurate and efficient protein synthesis under certain stress conditions. May act as a fidelity factor of the translation reaction, by catalyzing a one-codon backward translocation of tRNAs on improperly translocated ribosomes. Back-translocation proceeds from a post-translocation (POST) complex to a pre-translocation (PRE) complex, thus giving elongation factor G a second chance to translocate the tRNAs correctly. Binds to ribosomes in a GTP-dependent manner. In Rhodopirellula baltica (strain DSM 10527 / NCIMB 13988 / SH1), this protein is Elongation factor 4 2.